We begin with the raw amino-acid sequence, 479 residues long: MAPADIGLIGLAVMGKNLVLNMIDHGFAVSVYNRSPEKTEEFLKEHGENISLQGFTAIEEFVQSLKRPRKIMIMIKAGAPVDEMISSLLPFLEEGDILIDGGNSYYLDSERRYIDLKKKGILFVGMGVSGGEEGARKGPSIMPGGNIEAWPVIAPIFQSIAAQVDGQPCCSWIGTGGAGHFVKAVHNGIEYGDIQLICETYEILKSRLDLSLEQIGNIFFEWNQTDLNSYLMGASAAVLTAKDENGVAVASTILDVAGQKGTGRWVAEDAIKAGVPMSLIIESVLARYLSAWKEVRRQAAREFPVASLLYQPSQEASVLIEDAREALYAAKIISYAQGFMLLKQISEERNWDLNLGELALIWRGGCIIQSAFLDKIHQGFESCPDAHSLMLQDYFKNVLLNSETGFRRAILHAVGAGVAIPCLASALAFYDGYRTENSPLFLVQGLRDYFGAHGYERQDRPRGEFYHTDWLGSKNASRM.

NADP(+)-binding positions include 10–15 (GLAVMG), 33–35 (NRS), 75–77 (IKA), and Asn-103. Residues Asn-103 and 129 to 131 (SGG) contribute to the substrate site. Lys-183 functions as the Proton acceptor in the catalytic mechanism. 186–187 (HN) contacts substrate. The Proton donor role is filled by Glu-190. Residues Tyr-191, Lys-260, Arg-287, Arg-447, and His-453 each coordinate substrate.

Belongs to the 6-phosphogluconate dehydrogenase family. As to quaternary structure, homodimer.

It carries out the reaction 6-phospho-D-gluconate + NADP(+) = D-ribulose 5-phosphate + CO2 + NADPH. It participates in carbohydrate degradation; pentose phosphate pathway; D-ribulose 5-phosphate from D-glucose 6-phosphate (oxidative stage): step 3/3. Functionally, catalyzes the oxidative decarboxylation of 6-phosphogluconate to ribulose 5-phosphate and CO(2), with concomitant reduction of NADP to NADPH. The sequence is that of 6-phosphogluconate dehydrogenase, decarboxylating (gnd) from Chlamydia muridarum (strain MoPn / Nigg).